We begin with the raw amino-acid sequence, 436 residues long: Cysteine--tRNA ligase (436 aa).

Position 24 (C24) interacts with Zn(2+). The short motif at P26–N36 is the 'HIGH' region element. Zn(2+)-binding residues include C202, H227, and E231. Positions K259 to S263 match the 'KMSKS' region motif. An ATP-binding site is contributed by K262.

The protein belongs to the class-I aminoacyl-tRNA synthetase family. As to quaternary structure, monomer. Requires Zn(2+) as cofactor.

It localises to the cytoplasm. It catalyses the reaction tRNA(Cys) + L-cysteine + ATP = L-cysteinyl-tRNA(Cys) + AMP + diphosphate. The protein is Cysteine--tRNA ligase of Ureaplasma parvum serovar 3 (strain ATCC 700970).